A 96-amino-acid chain; its full sequence is Large ribosomal subunit protein bL25 (96 aa).

Belongs to the bacterial ribosomal protein bL25 family. Part of the 50S ribosomal subunit; part of the 5S rRNA/L5/L18/L25 subcomplex. Contacts the 5S rRNA. Binds to the 5S rRNA independently of L5 and L18.

Functionally, this is one of the proteins that binds to the 5S RNA in the ribosome where it forms part of the central protuberance. The chain is Large ribosomal subunit protein bL25 from Francisella tularensis subsp. tularensis (strain FSC 198).